An 83-amino-acid polypeptide reads, in one-letter code: Scyreptin (83 aa).

In terms of biological role, cationic antimicrobial peptide that exhibits a potent and broad-spectrum antimicrobial activity against both bacteria and fungi, as well as against the multidrug-resistant bacteria P.aeruginosa. Exhibits rapid bactericidal kinetic. Acts by destroying the integrity of bacterial membranes, leading to bacterial death. Also exhibits potent anti-biofilm activity against P.aeruginosa. Shows high thermal stability and ion tolerance, as it maintains antibacterial activity even when heated to 100 degrees Celsius for 30 minutes and in presence of high levels of NaCl, CaCl(2) and MgCl(2). Does not show cytotoxicity and hemolytic activity. In a mouse model of burn infection, exhibits a remarkably reduction in the bacterial load caused by multidrug-resistant P.aeruginosa at the site of infection, and promotes wound healing. This is Scyreptin from Scylla paramamosain (Mud crab).